Reading from the N-terminus, the 269-residue chain is Hemin import ATP-binding protein HmuV (269 aa).

An ABC transporter domain is found at 5–242 (LDAEAASFAI…SLIRRVFDIA (238 aa)). 37 to 44 (GPNGAGKS) is a binding site for ATP.

It belongs to the ABC transporter superfamily. Heme (hemin) importer (TC 3.A.1.14.5) family. The complex is composed of two ATP-binding proteins (HmuV), two transmembrane proteins (HmuU) and a solute-binding protein (HmuT).

The protein resides in the cell inner membrane. In terms of biological role, part of the ABC transporter complex HmuTUV involved in hemin import. Responsible for energy coupling to the transport system. The polypeptide is Hemin import ATP-binding protein HmuV (Rhodopseudomonas palustris (strain BisB18)).